A 452-amino-acid polypeptide reads, in one-letter code: Caspase-2 (452 aa).

Residue Ala2 is modified to N-acetylalanine. The propeptide occupies 2-169 (AASSGRSQSS…TMEHSLDNGD (168 aa)). Residues 32 to 121 (MHPDHQETLK…GHLEDLLLTT (90 aa)) enclose the CARD domain. Residue Ser157 is modified to Phosphoserine. Catalysis depends on residues His277 and Cys320. A propeptide spanning residues 326–333 (DRGVDQQD) is cleaved from the precursor. The span at 327–336 (RGVDQQDGKN) shows a compositional bias: basic and acidic residues. The interval 327 to 349 (RGVDQQDGKNHAQSPGCEESDAG) is disordered. Phosphoserine is present on Ser340.

This sequence belongs to the peptidase C14A family. Heterotetramer that consists of two anti-parallel arranged heterodimers, each one formed by a p18 subunit and a p12 subunit. Forms a complex named the PIDDosome with PIDD1 and CRADD. Interacts with NOL3 (via CARD domain); inhibits CASP2 activity in a phosphorylation-dependent manner. The mature protease can process its own propeptide, but not that of other caspases.

The enzyme catalyses Strict requirement for an Asp residue at P1, with 316-Asp being essential for proteolytic activity and has a preferred cleavage sequence of Val-Asp-Val-Ala-Asp-|-.. Its function is as follows. Involved in the activation cascade of caspases responsible for apoptosis execution. Might function by either activating some proteins required for cell death or inactivating proteins necessary for cell survival. Associates with PIDD1 and CRADD to form the PIDDosome, a complex that activates CASP2 and triggers apoptosis in response to genotoxic stress. This chain is Caspase-2 (Casp2), found in Rattus norvegicus (Rat).